A 1103-amino-acid chain; its full sequence is Bifunctional cytochrome P450/NADPH--P450 reductase (1103 aa).

The cytochrome P450 stretch occupies residues 1–491 (MSTPKAEPVP…SSSEHADHAA (491 aa)). Residue Cys-415 coordinates heme. The NADPH--P450 reductase stretch occupies residues 492-1103 (GHGKAGAAKK…KERYTTDIFA (612 aa)). Positions 508 to 649 (MHVYYGSNTG…DFDTWGETSF (142 aa)) constitute a Flavodoxin-like domain. FMN contacts are provided by residues 514-519 (SNTGTC), 561-564 (SYEG), Cys-596, and Thr-604. The FAD-binding FR-type domain occupies 685 to 924 (LQLQEGLVVE…RPSHTGFKPP (240 aa)).

In the N-terminal section; belongs to the cytochrome P450 family. Heme is required as a cofactor. Requires FAD as cofactor. FMN serves as cofactor.

The enzyme catalyses 2 oxidized [cytochrome P450] + NADPH = 2 reduced [cytochrome P450] + NADP(+) + H(+). The catalysed reaction is an organic molecule + reduced [NADPH--hemoprotein reductase] + O2 = an alcohol + oxidized [NADPH--hemoprotein reductase] + H2O + H(+). Functionally, functions as a fatty acid monooxygenase. Also displays a NADPH-dependent reductase activity in the C-terminal domain, which allows electron transfer from NADPH to the heme iron of the cytochrome P450 N-terminal domain. The chain is Bifunctional cytochrome P450/NADPH--P450 reductase from Aspergillus oryzae (strain ATCC 42149 / RIB 40) (Yellow koji mold).